The primary structure comprises 322 residues: Myeloid-associated differentiation marker (322 aa).

Residues 1–18 (MPVTVTRTTITTTTTSSS) show a composition bias toward low complexity. A disordered region spans residues 1-21 (MPVTVTRTTITTTTTSSSGLG). S22 is modified (phosphoserine). MARVEL domains are found at residues 31 to 163 (ALTQ…ARPG) and 168 to 319 (YMAT…HLVF). The next 8 helical transmembrane spans lie at 41-61 (LLQL…GAWT), 70-90 (FTWC…LCGL), 101-121 (FPIT…IIYP), 137-157 (AIAA…EVAW), 171-191 (TVPG…FAFI), 203-223 (LEWC…AILL), 239-259 (FLSG…VLWP), and 294-314 (LAVA…LVHS).

This sequence belongs to the MAL family. In terms of tissue distribution, widely expressed. Not detected in thymus.

Its subcellular location is the membrane. The polypeptide is Myeloid-associated differentiation marker (MYADM) (Homo sapiens (Human)).